Consider the following 260-residue polypeptide: Protein phosphatase 1 regulatory subunit 35 (260 aa).

The disordered stretch occupies residues 1–100 (MMGFGASALE…PLLVAGAPGD (100 aa)). Ser-46 and Ser-53 each carry phosphoserine. The span at 64-76 (RKGRRGGSRRGRQ) shows a compositional bias: basic residues.

It belongs to the PPP1R35 family. As to quaternary structure, interacts with PPP1CA; this interaction mediates the PPP1CA phosphatase activity inhibition. Interacts with RTTN; this interaction allows the mutual recruitment to the centriole.

It is found in the cytoplasm. Its subcellular location is the cytoskeleton. The protein resides in the microtubule organizing center. It localises to the centrosome. The protein localises to the centriole. In terms of biological role, during centriole duplication, plays a role in the centriole elongation by promoting the recruitment of the microtubule-binding elongation machinery through its interaction with TTTN, leading to the centriole to centrosome conversion. In addition may play a role in the primary cilia assembly. The polypeptide is Protein phosphatase 1 regulatory subunit 35 (Mus musculus (Mouse)).